The following is a 432-amino-acid chain: Trigger factor (432 aa).

In terms of domain architecture, PPIase FKBP-type spans 161-246; it reads GTRATINFVG…VVKVEARELP (86 aa).

Belongs to the FKBP-type PPIase family. Tig subfamily.

The protein localises to the cytoplasm. It catalyses the reaction [protein]-peptidylproline (omega=180) = [protein]-peptidylproline (omega=0). Functionally, involved in protein export. Acts as a chaperone by maintaining the newly synthesized protein in an open conformation. Functions as a peptidyl-prolyl cis-trans isomerase. This is Trigger factor from Aliivibrio salmonicida (strain LFI1238) (Vibrio salmonicida (strain LFI1238)).